The following is a 428-amino-acid chain: Phosphomethylpyrimidine synthase 2 (428 aa).

Substrate-binding positions include N65, M94, Y123, H158, 180 to 182, 221 to 224, and E260; these read SRG and DGMR. H264 contacts Zn(2+). Residue Y287 coordinates substrate. H328 is a Zn(2+) binding site. [4Fe-4S] cluster is bound by residues C405, C408, and C412.

This sequence belongs to the ThiC family. The cofactor is [4Fe-4S] cluster.

It carries out the reaction 5-amino-1-(5-phospho-beta-D-ribosyl)imidazole + S-adenosyl-L-methionine = 4-amino-2-methyl-5-(phosphooxymethyl)pyrimidine + CO + 5'-deoxyadenosine + formate + L-methionine + 3 H(+). Its pathway is cofactor biosynthesis; thiamine diphosphate biosynthesis. Its function is as follows. Catalyzes the synthesis of the hydroxymethylpyrimidine phosphate (HMP-P) moiety of thiamine from aminoimidazole ribotide (AIR) in a radical S-adenosyl-L-methionine (SAM)-dependent reaction. The chain is Phosphomethylpyrimidine synthase 2 from Methanosarcina barkeri (strain Fusaro / DSM 804).